We begin with the raw amino-acid sequence, 131 residues long: UPF0102 protein RALTA_A3032 (131 aa).

Polar residues predominate over residues Met1–Ser12. Positions Met1–Glu21 are disordered.

Belongs to the UPF0102 family.

The protein is UPF0102 protein RALTA_A3032 of Cupriavidus taiwanensis (strain DSM 17343 / BCRC 17206 / CCUG 44338 / CIP 107171 / LMG 19424 / R1) (Ralstonia taiwanensis (strain LMG 19424)).